A 107-amino-acid chain; its full sequence is Ferredoxin CarAc (107 aa).

Residues 6-102 (LKVCAASDMQ…VEVKEGEVYV (97 aa)) form the Rieske domain. Positions 46, 48, 65, and 68 each coordinate [2Fe-2S] cluster.

Monomer. Carbazole 1,9a-dioxygenase complex consists of a terminal oxygenase component CarAa, a ferredoxin reductase component CarAd and a ferredoxin component CarAc. Requires [2Fe-2S] cluster as cofactor.

Functionally, part of the multicomponent carbazole 1,9a-dioxygenase (CARDO), that converts carbazole (CAR) into 2-aminobiphenyl-2,3-diol. Acts as a mediator in the electron transfer from CarAd to CarAa. The sequence is that of Ferredoxin CarAc (carAc) from Metapseudomonas resinovorans (Pseudomonas resinovorans).